The chain runs to 312 residues: Glyoxylate/hydroxypyruvate reductase A (312 aa).

Arg227 is a catalytic residue. His275 (proton donor) is an active-site residue.

It belongs to the D-isomer specific 2-hydroxyacid dehydrogenase family. GhrA subfamily.

It is found in the cytoplasm. The enzyme catalyses glycolate + NADP(+) = glyoxylate + NADPH + H(+). The catalysed reaction is (R)-glycerate + NAD(+) = 3-hydroxypyruvate + NADH + H(+). It carries out the reaction (R)-glycerate + NADP(+) = 3-hydroxypyruvate + NADPH + H(+). Catalyzes the NADPH-dependent reduction of glyoxylate and hydroxypyruvate into glycolate and glycerate, respectively. This is Glyoxylate/hydroxypyruvate reductase A from Shigella dysenteriae serotype 1 (strain Sd197).